We begin with the raw amino-acid sequence, 266 residues long: GTP cyclohydrolase FolE2 (266 aa).

Belongs to the GTP cyclohydrolase IV family.

The catalysed reaction is GTP + H2O = 7,8-dihydroneopterin 3'-triphosphate + formate + H(+). It functions in the pathway cofactor biosynthesis; 7,8-dihydroneopterin triphosphate biosynthesis; 7,8-dihydroneopterin triphosphate from GTP: step 1/1. Converts GTP to 7,8-dihydroneopterin triphosphate. The polypeptide is GTP cyclohydrolase FolE2 (Syntrophotalea carbinolica (strain DSM 2380 / NBRC 103641 / GraBd1) (Pelobacter carbinolicus)).